Consider the following 609-residue polypeptide: Myoneurin (609 aa).

One can recognise a BTB domain in the interval 24 to 89; that stretch reads CDCTILIGDF…IYSGNLNYDS (66 aa). 2 short sequence motifs (nuclear localization signal) span residues 172-188 and 257-262; these read KKSQ…RSHQ and QKPAKL. 8 consecutive C2H2-type zinc fingers follow at residues 301–323, 329–351, 357–380, 386–408, 414–436, 442–464, 470–492, and 498–521; these read PVCN…MRIH, YVCH…VRTH, YQCK…RMHH, YKCD…ARKH, YVCD…VRRH, YVCD…ARKH, YICG…FRSH, and FVCE…LKMH. Residues 528–553 are disordered; it reads IEMKSAENSSSSEDSTTKSPEPESLE. Residues 533–546 are compositionally biased toward low complexity; that stretch reads AENSSSSEDSTTKS.

The protein resides in the nucleus. This is Myoneurin (mynn) from Xenopus laevis (African clawed frog).